Reading from the N-terminus, the 288-residue chain is Probable sulfate transport system permease protein cysT (288 aa).

The next 8 helical transmembrane spans lie at 2 to 22 (IPLFFIPPFIILFITKGKFRF), 28 to 48 (LVLACALHYGTFILALPIFFL), 77 to 97 (FLTALLATIINAIFGLILAWV), 112 to 132 (TVDLPFALPTSVGGLTLMTVF), 149 to 169 (IVFNPIGVLLAMIFVSLPFVV), 196 to 218 (TTFWHILFPPLTPSLLTGTTLGF), 227 to 247 (SIVLIASNIPMKDLVISVLLF), and 257 to 277 (SATIIASFVLIISFTALFFIN). Residues 73 to 277 (YGFTFLTALL…ISFTALFFIN (205 aa)) form the ABC transmembrane type-1 domain.

Belongs to the binding-protein-dependent transport system permease family. CysTW subfamily.

The protein resides in the plastid. The protein localises to the chloroplast membrane. In terms of biological role, part of the ABC transporter complex cysAWTP (TC 3.A.1.6.1) involved in sulfate/thiosulfate import. Probably responsible for the translocation of the substrate across the membrane. The polypeptide is Probable sulfate transport system permease protein cysT (cysT) (Marchantia polymorpha (Common liverwort)).